Here is a 233-residue protein sequence, read N- to C-terminus: Putative glutathione peroxidase 7, chloroplastic (233 aa).

The N-terminal 69 residues, 1–69 (MAFSYASFST…KSKNFSVYAR (69 aa)), are a transit peptide targeting the chloroplast. Cys108 is a catalytic residue.

This sequence belongs to the glutathione peroxidase family.

The protein localises to the plastid. Its subcellular location is the chloroplast. The enzyme catalyses 2 glutathione + H2O2 = glutathione disulfide + 2 H2O. Functionally, may constitute a glutathione peroxidase-like protective system against oxidative stresses. In Arabidopsis thaliana (Mouse-ear cress), this protein is Putative glutathione peroxidase 7, chloroplastic (GPX7).